The sequence spans 159 residues: Ribosome-binding factor A (159 aa).

The interval 127-159 (TYAGEADPYRRPAVDDAGDSADDADPAEDERPS) is disordered. A compositionally biased stretch (acidic residues) spans 142-159 (DAGDSADDADPAEDERPS).

Belongs to the RbfA family. Monomer. Binds 30S ribosomal subunits, but not 50S ribosomal subunits or 70S ribosomes.

Its subcellular location is the cytoplasm. In terms of biological role, one of several proteins that assist in the late maturation steps of the functional core of the 30S ribosomal subunit. Associates with free 30S ribosomal subunits (but not with 30S subunits that are part of 70S ribosomes or polysomes). Required for efficient processing of 16S rRNA. May interact with the 5'-terminal helix region of 16S rRNA. In Beutenbergia cavernae (strain ATCC BAA-8 / DSM 12333 / CCUG 43141 / JCM 11478 / NBRC 16432 / NCIMB 13614 / HKI 0122), this protein is Ribosome-binding factor A.